Reading from the N-terminus, the 57-residue chain is Bowman-Birk type proteinase inhibitor B4 (57 aa).

4 disulfides stabilise this stretch: cysteine 6–cysteine 55, cysteine 12–cysteine 17, cysteine 26–cysteine 33, and cysteine 30–cysteine 47.

Belongs to the Bowman-Birk serine protease inhibitor family. In terms of tissue distribution, expressed in bulb (at protein level).

Serine protease inhibitor. Inhibits trypsin (Ki = 110 nM) and very weakly inhibits chymotrypsin (Ki =1200 nM). Does not inhibit bacterial subtilisin. The sequence is that of Bowman-Birk type proteinase inhibitor B4 from Hyacinthus orientalis (Common hyacinth).